Reading from the N-terminus, the 342-residue chain is Dihydroorotase (342 aa).

Zn(2+)-binding residues include H13 and H15. Substrate-binding positions include 15-17 (HLR) and N41. Residues K98, H135, and H173 each coordinate Zn(2+). The residue at position 98 (K98) is an N6-carboxylysine. H135 lines the substrate pocket. Residue L218 participates in substrate binding. D246 is a binding site for Zn(2+). D246 is a catalytic residue. Substrate is bound by residues H250 and A262.

This sequence belongs to the metallo-dependent hydrolases superfamily. DHOase family. Class II DHOase subfamily. As to quaternary structure, homodimer. It depends on Zn(2+) as a cofactor.

The catalysed reaction is (S)-dihydroorotate + H2O = N-carbamoyl-L-aspartate + H(+). It participates in pyrimidine metabolism; UMP biosynthesis via de novo pathway; (S)-dihydroorotate from bicarbonate: step 3/3. Catalyzes the reversible cyclization of carbamoyl aspartate to dihydroorotate. This is Dihydroorotase from Aliivibrio fischeri (strain MJ11) (Vibrio fischeri).